The chain runs to 518 residues: D-aminopeptidase (518 aa).

The Nucleophile role is filled by S62. The active-site Proton donor/acceptor is the K65. The disordered stretch occupies residues 373-392 (FGTGPEKMDISGENEAQSSM). Residues 477 to 487 (QRSMDAPSPGE) form an important for specificity region. D481 contributes to the substrate binding site.

This sequence belongs to the peptidase S12 family. Homodimer.

The catalysed reaction is Release of an N-terminal D-amino acid from a peptide, Xaa-|-Yaa-, in which Xaa is preferably D-Ala, D-Ser or D-Thr. D-amino acid amides and methyl esters also are hydrolyzed, as is glycine amide.. Inhibited by beta-lactam compounds such as 6-aminopenicillic acid, 7-aminocephalosporanic acid, benzylpenicillin and ampicillin. Inhibited by p-chloromercuribenzoate. In terms of biological role, hydrolyzes N-terminal residues in D-amino acid-containing peptides. The polypeptide is D-aminopeptidase (Brucella melitensis biotype 1 (strain ATCC 23456 / CCUG 17765 / NCTC 10094 / 16M)).